A 122-amino-acid polypeptide reads, in one-letter code: Large ribosomal subunit protein uL14 (122 aa).

It belongs to the universal ribosomal protein uL14 family. As to quaternary structure, part of the 50S ribosomal subunit. Forms a cluster with proteins L3 and L19. In the 70S ribosome, L14 and L19 interact and together make contacts with the 16S rRNA in bridges B5 and B8.

Functionally, binds to 23S rRNA. Forms part of two intersubunit bridges in the 70S ribosome. The chain is Large ribosomal subunit protein uL14 from Caldicellulosiruptor saccharolyticus (strain ATCC 43494 / DSM 8903 / Tp8T 6331).